Reading from the N-terminus, the 71-residue chain is uncharacterized protein (71 aa).

Positions 1 to 10 (MHRKKRKKEK) are enriched in basic residues. A disordered region spans residues 1-20 (MHRKKRKKEKKRTEKDNTTN). A helical transmembrane segment spans residues 21-43 (LPPLFLFPCSLSLPTLLAPVHYI).

It localises to the membrane. This is an uncharacterized protein from Saccharomyces cerevisiae (strain ATCC 204508 / S288c) (Baker's yeast).